A 244-amino-acid polypeptide reads, in one-letter code: MSENSANELKYSRVLLKVSGEALMGDKGFGWDIETIDNLSHDLKEVHDLGVQLCLVVGGGNIFRGASASAPFGFERASNDYIGMLATMMNALSLQNSLEKINVQSRVLSAVSITAVCETYIRRRAIRHLEKGRIVICAAGVGNPFFTTDTAAALRGIEMGCNVIFKGTQVDGVYSADPKKVADAVRYDKISYRELLSLDLKIMDVAAVSLARDHSIPIIVFNLGKRGALADIICGGGLYTTIYN.

ATP is bound at residue 17–20 (KVSG). The interval 25-30 (GDKGFG) is involved in allosteric activation by GTP. Gly59 contributes to the UMP binding site. Residues Gly60 and Arg64 each contribute to the ATP site. Residues Asp80 and 141–148 (VGNPFFTT) each bind UMP. ATP contacts are provided by Thr168, Gln169, Tyr174, and Asp177.

This sequence belongs to the UMP kinase family. In terms of assembly, homohexamer.

The protein resides in the cytoplasm. The enzyme catalyses UMP + ATP = UDP + ADP. It participates in pyrimidine metabolism; CTP biosynthesis via de novo pathway; UDP from UMP (UMPK route): step 1/1. Its activity is regulated as follows. Allosterically activated by GTP. Inhibited by UTP. Functionally, catalyzes the reversible phosphorylation of UMP to UDP. This chain is Uridylate kinase, found in Ehrlichia ruminantium (strain Welgevonden).